A 185-amino-acid chain; its full sequence is Bcl-2-modifying factor (185 aa).

Residues 1-28 (MEPPQCVEELEDDVFQPEDGEPGTQPGS) are disordered. Residues 8 to 21 (EELEDDVFQPEDGE) show a composition bias toward acidic residues. An interaction with DLC2 region spans residues 67-75 (DKATQTLSP). Positions 134–148 (IARKLQCIADQFHRL) match the BH3 motif.

The protein belongs to the Bcl-2 family. Interacts with MCL1, BCL2, BCL2L1/BCL-Xl, BCL2A1 and BCL2L2/BCL-w. Interacts with the myosin V actin motor complex through its binding to DLC2.

Its function is as follows. May play a role in apoptosis. This is Bcl-2-modifying factor (Bmf) from Rattus norvegicus (Rat).